Here is a 175-residue protein sequence, read N- to C-terminus: Ribosome maturation factor RimM (175 aa).

The PRC barrel domain maps to 96-175 (EGDYYWHDLI…TITVDWDAGF (80 aa)).

The protein belongs to the RimM family. Binds ribosomal protein uS19.

It is found in the cytoplasm. In terms of biological role, an accessory protein needed during the final step in the assembly of 30S ribosomal subunit, possibly for assembly of the head region. Essential for efficient processing of 16S rRNA. May be needed both before and after RbfA during the maturation of 16S rRNA. It has affinity for free ribosomal 30S subunits but not for 70S ribosomes. In Actinobacillus pleuropneumoniae serotype 5b (strain L20), this protein is Ribosome maturation factor RimM.